The chain runs to 369 residues: Probable dual-specificity RNA methyltransferase RlmN (369 aa).

Glu-108 serves as the catalytic Proton acceptor. A Radical SAM core domain is found at 114–352 (YPDRATLCIS…CTVRDTKGQE (239 aa)). A disulfide bond links Cys-121 and Cys-357. Residues Cys-128, Cys-132, and Cys-135 each coordinate [4Fe-4S] cluster. Residues 178 to 179 (GE), Ser-212, 235 to 237 (SLH), and Asn-314 each bind S-adenosyl-L-methionine. The active-site S-methylcysteine intermediate is the Cys-357.

The protein belongs to the radical SAM superfamily. RlmN family. The cofactor is [4Fe-4S] cluster.

The protein resides in the cytoplasm. It carries out the reaction adenosine(2503) in 23S rRNA + 2 reduced [2Fe-2S]-[ferredoxin] + 2 S-adenosyl-L-methionine = 2-methyladenosine(2503) in 23S rRNA + 5'-deoxyadenosine + L-methionine + 2 oxidized [2Fe-2S]-[ferredoxin] + S-adenosyl-L-homocysteine. It catalyses the reaction adenosine(37) in tRNA + 2 reduced [2Fe-2S]-[ferredoxin] + 2 S-adenosyl-L-methionine = 2-methyladenosine(37) in tRNA + 5'-deoxyadenosine + L-methionine + 2 oxidized [2Fe-2S]-[ferredoxin] + S-adenosyl-L-homocysteine. Its function is as follows. Specifically methylates position 2 of adenine 2503 in 23S rRNA and position 2 of adenine 37 in tRNAs. In Corynebacterium efficiens (strain DSM 44549 / YS-314 / AJ 12310 / JCM 11189 / NBRC 100395), this protein is Probable dual-specificity RNA methyltransferase RlmN.